The sequence spans 810 residues: Calpain-3 (810 aa).

Low complexity predominate over residues 9 to 27 (VAQQTAAGSVPSTTSTTTE). The disordered stretch occupies residues 9–31 (VAQQTAAGSVPSTTSTTTEGTGG). Positions 68–410 (LYEDPDFPPN…FTKLEICNLT (343 aa)) constitute a Calpain catalytic domain. Residues cysteine 123, histidine 327, and asparagine 351 contribute to the active site. Positions 411 to 579 (PDTLEADKLQ…KRSLSEEVEN (169 aa)) are domain III. The interval 578–639 (ENMIEADRPS…SAKAREKSEE (62 aa)) is disordered. The linker stretch occupies residues 580-638 (MIEADRPSKKKKGKPIIFVSDRANSNKELTTDEDAGKDGEKTHVDEKKRSSAKAREKSE). A compositionally biased stretch (basic and acidic residues) spans 613 to 639 (DAGKDGEKTHVDEKKRSSAKAREKSEE). EF-hand domains are found at residues 638–672 (EEETQFRNIFRQIAGDDMEICREELRNVLNNVVKK), 681–714 (FELESSRSMIALMDTDGSGKINFDEFRHLWDKIK), 711–746 (DKIKSWQKIFKHYDADHSGTINSYEMRNAVKDAGFR), and 776–810 (VRLDAMFRAFHAFDKDGDGIIKLNVLEWLQLTMYA). The segment at 639–809 (EETQFRNIFR…VLEWLQLTMY (171 aa)) is domain IV. The Ca(2+) site is built by alanine 651, aspartate 654, glutamate 656, glutamate 661, aspartate 694, aspartate 696, serine 698, lysine 700, glutamate 705, aspartate 724, aspartate 726, serine 728, threonine 730, glutamate 735, aspartate 789, aspartate 791, aspartate 793, and isoleucine 795.

Belongs to the peptidase C2 family. In terms of assembly, homodimer; via EF-hand domain 4. Interacts with TTN/titin. Interacts with CMYA5; this interaction, which results in CMYA5 proteolysis, may protect CAPN3 from autolysis. Interacts with SIMC1. Interacts with UTP25; the interaction is required for CAPN3 translocation to the nucleolus. In terms of tissue distribution, skeletal muscle. Low levels in spleen, intestine and bone.

It is found in the cytoplasm. Its subcellular location is the nucleus. The protein localises to the nucleolus. It catalyses the reaction Broad endopeptidase activity.. With respect to regulation, activated by micromolar concentrations of calcium and inhibited by calpastatin. In terms of biological role, calcium-regulated non-lysosomal thiol-protease. Proteolytically cleaves CTBP1. Mediates, with UTP25, the proteasome-independent degradation of p53/TP53. This is Calpain-3 (CAPN3) from Gallus gallus (Chicken).